We begin with the raw amino-acid sequence, 383 residues long: 8-amino-7-oxononanoate synthase (383 aa).

R21 contributes to the substrate binding site. Pyridoxal 5'-phosphate is bound at residue 108–109 (GF). H133 serves as a coordination point for substrate. The pyridoxal 5'-phosphate site is built by S179, H207, and T233. N6-(pyridoxal phosphate)lysine is present on K236. Substrate is bound at residue T350.

It belongs to the class-II pyridoxal-phosphate-dependent aminotransferase family. BioF subfamily. Homodimer. Pyridoxal 5'-phosphate is required as a cofactor.

It catalyses the reaction 6-carboxyhexanoyl-[ACP] + L-alanine + H(+) = (8S)-8-amino-7-oxononanoate + holo-[ACP] + CO2. It participates in cofactor biosynthesis; biotin biosynthesis. Functionally, catalyzes the decarboxylative condensation of pimeloyl-[acyl-carrier protein] and L-alanine to produce 8-amino-7-oxononanoate (AON), [acyl-carrier protein], and carbon dioxide. This chain is 8-amino-7-oxononanoate synthase, found in Yersinia enterocolitica serotype O:8 / biotype 1B (strain NCTC 13174 / 8081).